The following is a 326-amino-acid chain: Heterodimeric geranylgeranyl pyrophosphate synthase small subunit, chloroplastic (326 aa).

A chloroplast-targeting transit peptide spans 1 to 33 (MLFSGSAIPLSSFCSLPEKPHTLPMKLSPAAIR). Isopentenyl diphosphate contacts are provided by Lys88 and His120. Mg(2+) is bound by residues Asp127 and Asp133. Arg138 provides a ligand contact to dimethylallyl diphosphate. Position 139 (Arg139) interacts with isopentenyl diphosphate. The dimethylallyl diphosphate site is built by Lys220 and Gln258. Positions 274–301 (GAEKGMMEMAEELKEKAKKELQVFDNKY) form a coiled coil.

It belongs to the FPP/GGPP synthase family. Part of a heterodimeric geranyl(geranyl)diphosphate synthase. Interacts with GGPPS1 or GGPPS2, but not with GGPPS9. Interacts with LIL3.1 and LIL3.2. It depends on Mg(2+) as a cofactor. In terms of tissue distribution, expressed ubiquitously.

It is found in the plastid. The protein resides in the chloroplast thylakoid membrane. Its function is as follows. Heterodimeric geranyl(geranyl)-diphosphate (GPP) synthase small subunit. The small subunit alone is inactive in vitro while the large subunit GGPPS1 catalyzes mainly the production of geranygeranyl-diphosphate in vitro. Upon association of the two subunits, the product profile changes and the production of gerany-diphosphate is strongly increased. This is Heterodimeric geranylgeranyl pyrophosphate synthase small subunit, chloroplastic (GGR) from Arabidopsis thaliana (Mouse-ear cress).